The primary structure comprises 32 residues: C-reactive protein (32 aa).

The 31-residue stretch at 2-32 (VIKTLVFQSESNNSFVELIPMKPLNLRAFXL) folds into the Pentraxin (PTX) domain.

The protein belongs to the pentraxin family. In terms of assembly, homopentamer. Pentraxin (or pentaxin) have a discoid arrangement of 5 non-covalently bound subunits. In terms of processing, glycosylated.

The protein localises to the secreted. Its function is as follows. Displays several functions associated with host defense: it promotes agglutination, bacterial capsular swelling, phagocytosis, and complement fixation through its calcium-dependent binding to phosphorylcholine. The polypeptide is C-reactive protein (Pleuronectes platessa (European plaice)).